The primary structure comprises 121 residues: Large ribosomal subunit protein uL14c (121 aa).

Belongs to the universal ribosomal protein uL14 family. In terms of assembly, part of the 50S ribosomal subunit.

The protein localises to the plastid. Its subcellular location is the organellar chromatophore. In terms of biological role, binds to 23S rRNA. This chain is Large ribosomal subunit protein uL14c, found in Paulinella chromatophora.